Reading from the N-terminus, the 384-residue chain is Calreticulin-3 (384 aa).

The first 19 residues, 1 to 19 (MAAARVPLWAICVRRVALA), serve as a signal peptide directing secretion. Positions 20–197 (TVYFQEEFLD…GQSIESGSIE (178 aa)) are N-domain. An N-linked (GlcNAc...) asparagine glycan is attached at Asn-42. Cys-105 and Cys-137 are disulfide-bonded. 4 residues coordinate an alpha-D-glucoside: Tyr-109, Lys-111, Tyr-128, and Asp-135. 7 consecutive repeat copies span residues 191–202 (IESGSIEYDWQL), 209–220 (EKASAEAEGWDQ), 222–231 (AKDKSQDWEK), 235–246 (DASASKPSDWKG), 250–260 (GDWQAAMLQKP), 264–272 (DGLKPEGID), and 274–284 (DVWLHQKMKNS). The 4 X approximate repeats stretch occupies residues 191–246 (IESGSIEYDWQLTSLKKMEKASAEAEGWDQAAKDKSQDWEKHFLDASASKPSDWKG). The segment at 198 to 294 (YDWQLTSLKK…YLTEYDLSEF (97 aa)) is P-domain. The 3 X approximate repeats stretch occupies residues 250 to 284 (GDWQAAMLQKPPYQDGLKPEGIDKDVWLHQKMKNS). Residues 295–384 (ENIGAVGLEL…FKGFHRRNEF (90 aa)) form a C-domain region. Residue Glu-303 participates in an alpha-D-glucoside binding. The short motif at 381 to 384 (RNEF) is the Prevents secretion from ER element.

It belongs to the calreticulin family. In terms of assembly, component of an EIF2 complex at least composed of CELF1/CUGBP1, CALR, CALR3, EIF2S1, EIF2S2, HSP90B1 and HSPA5.

The protein resides in the endoplasmic reticulum lumen. During spermatogenesis, may act as a lectin-independent chaperone for specific client proteins such as ADAM3. CALR3 capacity for calcium-binding may be absent or much lower than that of CALR. Required for sperm fertility. The chain is Calreticulin-3 (CALR3) from Bos taurus (Bovine).